Consider the following 415-residue polypeptide: uncharacterized protein (415 aa).

Disordered stretches follow at residues Phe39–His77, Ala220–Thr247, and Val346–Lys415. Basic and acidic residues-rich tracts occupy residues Ala220–Asn238, Asp365–Met380, and Ser400–Lys415.

This is an uncharacterized protein from Rattus norvegicus (Rat).